The sequence spans 504 residues: Dimethylsulfoniopropionate lyase 5 (504 aa).

The protein belongs to the aspartate/glutamate racemases family. ALMA1 subfamily. In terms of assembly, homotetramer.

The catalysed reaction is S,S-dimethyl-beta-propiothetin = acrylate + dimethyl sulfide + H(+). Mediates cleavage of dimethylsulfoniopropionate (DMSP) into dimethyl sulfide (DMS) and acrylate. DMS is the principal form by which sulfur is transported from oceans to the atmosphere and is a key component of the ocean sulfur cycle. This chain is Dimethylsulfoniopropionate lyase 5, found in Emiliania huxleyi (strain CCMP1516).